Here is a 765-residue protein sequence, read N- to C-terminus: MKGRGTHAMSSKKNNLPKNVSVEMVDPDAGIWEATATIDNGDFGSRTLRFETGLLARQADGAVTAYLDEDTILLSTTTASRSPREGIDFFPLTVDVEERMYSAGRIPGSFFRREGRPGTDAILAARLIDRPLRPTFVKGLRNEVQVVITVMSIDPNEMYDVLAINGASASTQLSGLPVSSSVGGVRMALVVDEEHPEGQWVAFPTREQVSQSVFELVVAGRVTEPAKGGRGKKSQPNVAVMMVEAGATDNVVERIAEGAPAPTEAVVAEGIEAAKPFIATLCAAQDALRDAVDTESREFELFPPFDEDVYSAVEAECDADVAQIMTIADKQERDESLAENMQETVDALIEQFPERESEIRAAHNDLTRTIVRQRILEDGFRIDGRDHTSIRDLGIVVQLLPRAHGSALFERGETQILGVTTLDTLKMEQTIDSLGPETSKRYIHHYNFPPYSTGETGRVGSPKRREIGHGALAERALTPVLPSREEFPYTIRQVSEALGSNGSTSMGSVCASTLSLYNAGVPLKAPVAGIAMGLVSGLVDGKEKFVSLTDILGAEDAFGDMDFKVAGTSEYVTALQLDTKLDGLPSEVLASALGQARSARLEILQLMEDAIDAPDQMSELAPRITKISIPQNKIGEVIGPKGKTINQITEETGANISIEDDGTVFVSAVGGEAAEAAIEKINAIANPQQPKVGDRFLGTVVKTTAFGAFISLLPGRDGLLHISNIGGDRRIEKVEDELNVGDKIQVEIADIDNRGKISLVPVDED.

Mg(2+) contacts are provided by Asp556 and Asp562. The KH domain occupies 622–681; that stretch reads PRITKISIPQNKIGEVIGPKGKTINQITEETGANISIEDDGTVFVSAVGGEAAEAAIEKI. Residues 693 to 762 enclose the S1 motif domain; sequence GDRFLGTVVK…NRGKISLVPV (70 aa).

The protein belongs to the polyribonucleotide nucleotidyltransferase family. Requires Mg(2+) as cofactor.

The protein localises to the cytoplasm. It catalyses the reaction RNA(n+1) + phosphate = RNA(n) + a ribonucleoside 5'-diphosphate. Involved in mRNA degradation. Catalyzes the phosphorolysis of single-stranded polyribonucleotides processively in the 3'- to 5'-direction. The protein is Polyribonucleotide nucleotidyltransferase of Corynebacterium urealyticum (strain ATCC 43042 / DSM 7109).